The primary structure comprises 367 residues: mRNA-decapping enzyme-like protein (367 aa).

Disordered regions lie at residues 144–179, 196–246, and 299–333; these read PKAS…RDAP, NTAS…SSSP, and PNNA…PTGP. Polar residues predominate over residues 196–211; the sequence is NTASGSASGPYQSSAI. A compositionally biased stretch (low complexity) spans 212 to 234; the sequence is PHQPHQPHQPTIAPPVAAAAPPQ. Residues 299–309 show a composition bias toward polar residues; the sequence is PNNASHQQRSY. A compositionally biased stretch (pro residues) spans 315-331; sequence QPFPPPTPPPSLAPAPT.

It belongs to the DCP1 family. Homodimer. Component of the decapping complex. Interacts with DCP2 and DCP5. Interacts with BCHA1. As to expression, expressed in seedlings, mostly in root tips, root hairs, and the vascular system. Also present in roots, leaves, stems, and flowers.

It is found in the cytoplasm. The protein localises to the P-body. As a component of the decapping complex, involved in the degradation of mRNAs. Essential for postembryonic development. The protein is mRNA-decapping enzyme-like protein of Arabidopsis thaliana (Mouse-ear cress).